The following is a 709-amino-acid chain: Disintegrin and metalloproteinase domain-containing protein 5 (709 aa).

Residues 1 to 98 constitute a propeptide that is removed on maturation; sequence MKTPISSILK…TLSGFIHVIY (98 aa). Over 1-649 the chain is Extracellular; the sequence is MKTPISSILK…QQNRGIHPKQ (649 aa). The 194-residue stretch at 141–334 folds into the Peptidase M12B domain; it reads RYIKTDIVVD…QDLECLQDLP (194 aa). Cystine bridges form between cysteine 247/cysteine 329, cysteine 289/cysteine 314, cysteine 291/cysteine 296, cysteine 406/cysteine 426, cysteine 585/cysteine 597, cysteine 591/cysteine 603, and cysteine 605/cysteine 614. The Disintegrin domain maps to 346–434; sequence RRICGNGILE…YCVPDTFARN (89 aa). Residues 581–615 enclose the EGF-like; calcium-binding domain; sequence DFQQCNTSRDCNDHGVCNNFNHCHCDKGYNPPYCE. Residues 650–670 traverse the membrane as a helical segment; that stretch reads QLQLILYITLPLIMIISAVFI. Residues 671 to 709 lie on the Cytoplasmic side of the membrane; it reads KQSKLSRLCGRERSEGTSCITEDSVSNTKMTTNEGSTLH. Residues 690 to 709 form a disordered region; sequence ITEDSVSNTKMTTNEGSTLH.

In terms of assembly, interacts with TEX101. In terms of tissue distribution, detected in testis.

It is found in the membrane. In terms of biological role, this is a non catalytic metalloprotease-like protein. May play a role in sperm-egg fusion. This Rattus norvegicus (Rat) protein is Disintegrin and metalloproteinase domain-containing protein 5 (Adam5).